The following is a 155-amino-acid chain: UPF0225 protein PC1_1977 (155 aa).

It belongs to the UPF0225 family.

This is UPF0225 protein PC1_1977 from Pectobacterium carotovorum subsp. carotovorum (strain PC1).